Reading from the N-terminus, the 224-residue chain is Large ribosomal subunit protein uL1c (224 aa).

The protein belongs to the universal ribosomal protein uL1 family. As to quaternary structure, part of the 50S ribosomal subunit.

It localises to the plastid. The protein localises to the chloroplast. Functionally, binds directly to 23S rRNA. Might be involved in E site tRNA release (Potential). This is Large ribosomal subunit protein uL1c (rpl1) from Cyanidioschyzon merolae (strain NIES-3377 / 10D) (Unicellular red alga).